Here is a 261-residue protein sequence, read N- to C-terminus: Hydroxyethylthiazole kinase (261 aa).

Methionine 45 is a substrate binding site. 2 residues coordinate ATP: arginine 121 and serine 167. Glycine 194 contacts substrate.

This sequence belongs to the Thz kinase family. Requires Mg(2+) as cofactor.

The catalysed reaction is 5-(2-hydroxyethyl)-4-methylthiazole + ATP = 4-methyl-5-(2-phosphooxyethyl)-thiazole + ADP + H(+). Its pathway is cofactor biosynthesis; thiamine diphosphate biosynthesis; 4-methyl-5-(2-phosphoethyl)-thiazole from 5-(2-hydroxyethyl)-4-methylthiazole: step 1/1. Catalyzes the phosphorylation of the hydroxyl group of 4-methyl-5-beta-hydroxyethylthiazole (THZ). The chain is Hydroxyethylthiazole kinase from Vibrio atlanticus (strain LGP32) (Vibrio splendidus (strain Mel32)).